Reading from the N-terminus, the 500-residue chain is NAD(P)H-quinone oxidoreductase chain 4, chloroplastic (500 aa).

14 consecutive transmembrane segments (helical) span residues 4 to 24, 35 to 55, 87 to 107, 113 to 130, 134 to 154, 167 to 187, 208 to 228, 242 to 262, 272 to 292, 305 to 325, 330 to 350, 386 to 406, 416 to 436, and 462 to 482; these read FPWL…IFFL, YTIC…CYHF, IGPI…AWPV, LFHF…GLFS, LLLF…LLAM, FILY…GVAL, VLEI…SPII, HYST…YGLI, AHSI…IYAA, IAYS…SLTD, GALL…FLAG, LALP…GIIT, LLIT…SLSM, and LFLS…PDFV.

Belongs to the complex I subunit 4 family.

It localises to the plastid. The protein resides in the chloroplast thylakoid membrane. It carries out the reaction a plastoquinone + NADH + (n+1) H(+)(in) = a plastoquinol + NAD(+) + n H(+)(out). The catalysed reaction is a plastoquinone + NADPH + (n+1) H(+)(in) = a plastoquinol + NADP(+) + n H(+)(out). The chain is NAD(P)H-quinone oxidoreductase chain 4, chloroplastic from Solanum lycopersicum (Tomato).